Reading from the N-terminus, the 232-residue chain is 2,3,4,5-tetrahydropyridine-2,6-dicarboxylate N-acetyltransferase (232 aa).

Belongs to the transferase hexapeptide repeat family. DapH subfamily.

The enzyme catalyses (S)-2,3,4,5-tetrahydrodipicolinate + acetyl-CoA + H2O = L-2-acetamido-6-oxoheptanedioate + CoA. The protein operates within amino-acid biosynthesis; L-lysine biosynthesis via DAP pathway; LL-2,6-diaminopimelate from (S)-tetrahydrodipicolinate (acetylase route): step 1/3. Functionally, catalyzes the transfer of an acetyl group from acetyl-CoA to tetrahydrodipicolinate. The chain is 2,3,4,5-tetrahydropyridine-2,6-dicarboxylate N-acetyltransferase from Streptococcus sanguinis (strain SK36).